The primary structure comprises 1047 residues: Carbamoyl phosphate synthase arginine-specific large chain (1047 aa).

The segment at 1-401 (MPKRTDIQSV…GLQKAVRSLE (401 aa)) is carboxyphosphate synthetic domain. 12 residues coordinate ATP: arginine 129, arginine 169, glycine 175, glycine 176, lysine 208, isoleucine 210, glutamate 215, glycine 241, valine 242, histidine 243, glutamine 284, and glutamate 298. One can recognise an ATP-grasp 1 domain in the interval 133-327 (RQLMHELHEP…IARMAAKLSL (195 aa)). Positions 284, 298, and 300 each coordinate Mg(2+). Mn(2+) is bound by residues glutamine 284, glutamate 298, and asparagine 300. An oligomerization domain region spans residues 402–549 (IKTHGLSLPS…YSSWTGENDL (148 aa)). A carbamoyl phosphate synthetic domain region spans residues 550–933 (LLPEKAKERV…AFRKAFAWGE (384 aa)). In terms of domain architecture, ATP-grasp 2 spans 676–865 (YEFMRSVEVP…LITYTIDVLF (190 aa)). Residues arginine 712, alanine 750, glutamate 756, glycine 781, valine 782, histidine 783, serine 784, glutamine 824, and glutamate 836 each coordinate ATP. Positions 824, 836, and 838 each coordinate Mg(2+). Mn(2+)-binding residues include glutamine 824, glutamate 836, and asparagine 838. Positions 934 to 1047 (EQTPALFRKK…PFLLPDVVMN (114 aa)) are allosteric domain. An MGS-like domain is found at 937–1047 (PALFRKKGSV…PFLLPDVVMN (111 aa)).

It belongs to the CarB family. As to quaternary structure, composed of two chains; the small (or glutamine) chain promotes the hydrolysis of glutamine to ammonia, which is used by the large (or ammonia) chain to synthesize carbamoyl phosphate. Tetramer of heterodimers (alpha,beta)4. Mg(2+) is required as a cofactor. Requires Mn(2+) as cofactor.

It catalyses the reaction hydrogencarbonate + L-glutamine + 2 ATP + H2O = carbamoyl phosphate + L-glutamate + 2 ADP + phosphate + 2 H(+). The catalysed reaction is hydrogencarbonate + NH4(+) + 2 ATP = carbamoyl phosphate + 2 ADP + phosphate + 2 H(+). Its pathway is amino-acid biosynthesis; L-arginine biosynthesis; carbamoyl phosphate from bicarbonate: step 1/1. Its function is as follows. Large subunit of the glutamine-dependent carbamoyl phosphate synthetase (CPSase). CPSase catalyzes the formation of carbamoyl phosphate from the ammonia moiety of glutamine, carbonate, and phosphate donated by ATP, constituting the first step of the biosynthetic pathway leading to arginine and/or urea. The large subunit (synthetase) binds the substrates ammonia (free or transferred from glutamine from the small subunit), hydrogencarbonate and ATP and carries out an ATP-coupled ligase reaction, activating hydrogencarbonate by forming carboxy phosphate which reacts with ammonia to form carbamoyl phosphate. The polypeptide is Carbamoyl phosphate synthase arginine-specific large chain (Halalkalibacterium halodurans (strain ATCC BAA-125 / DSM 18197 / FERM 7344 / JCM 9153 / C-125) (Bacillus halodurans)).